A 275-amino-acid polypeptide reads, in one-letter code: Large ribosomal subunit protein uL2c (275 aa).

The interval 225–275 is disordered; that stretch reads MNPCDHPHGGGEGRSPIGRPRPVSPWGKPALGQRTRKGHKYSDQMILRRRK.

The protein belongs to the universal ribosomal protein uL2 family. As to quaternary structure, part of the 50S ribosomal subunit.

Its subcellular location is the plastid. The protein resides in the chloroplast. The protein is Large ribosomal subunit protein uL2c (rpl2) of Oltmannsiellopsis viridis (Marine flagellate).